Reading from the N-terminus, the 137-residue chain is Large-conductance mechanosensitive channel (137 aa).

A run of 2 helical transmembrane segments spans residues 9-29 (AFAVKGNVVDMAVGIIIGAAF) and 79-99 (IQTILDFIIVAFAIFMGVKVI).

The protein belongs to the MscL family. In terms of assembly, homopentamer.

The protein localises to the cell inner membrane. Functionally, channel that opens in response to stretch forces in the membrane lipid bilayer. May participate in the regulation of osmotic pressure changes within the cell. This Pseudomonas entomophila (strain L48) protein is Large-conductance mechanosensitive channel.